The sequence spans 647 residues: Probable squalene--hopene cyclase (647 aa).

One copy of the PFTB 1 repeat lies at 67–108 (EAKIGNYLRRTQGAHGGWPLVHDGPFDMSASVKSYFALKMIG). The active-site Proton donor is D388. PFTB repeat units lie at residues 413–454 (IARG…GALL) and 530–577 (IRKA…ALLG).

The protein belongs to the terpene cyclase/mutase family.

It catalyses the reaction squalene = hop-22(29)-ene. The catalysed reaction is squalene + H2O = hopan-22-ol. The protein operates within secondary metabolite biosynthesis; hopanoid biosynthesis. Its function is as follows. Catalyzes the cyclization of squalene into hopene. Probably part of an operon y4aABCD involved in the synthesis of an isoprenoid compound. This Sinorhizobium fredii (strain NBRC 101917 / NGR234) protein is Probable squalene--hopene cyclase (shc).